Reading from the N-terminus, the 543-residue chain is CTP synthase (543 aa).

The interval 1-265 is amidoligase domain; that stretch reads MTRFVFITGG…DTEVLRHFGL (265 aa). Ser13 contacts CTP. Residue Ser13 participates in UTP binding. Residue 14 to 19 participates in ATP binding; it reads SLGKGI. Position 54 (Tyr54) interacts with L-glutamine. An ATP-binding site is contributed by Asp71. Positions 71 and 139 each coordinate Mg(2+). Residues 146-148, 186-191, and Lys222 each bind CTP; these read DIE and KTKPTQ. UTP is bound by residues 186–191 and Lys222; that span reads KTKPTQ. The region spanning 291 to 542 is the Glutamine amidotransferase type-1 domain; the sequence is RIAVVGKYTA…VGAAVKKMRL (252 aa). Gly354 contacts L-glutamine. Catalysis depends on Cys381, which acts as the Nucleophile; for glutamine hydrolysis. Residues 382–385, Glu405, and Arg470 contribute to the L-glutamine site; that span reads FGMQ. Catalysis depends on residues His515 and Glu517.

Belongs to the CTP synthase family. In terms of assembly, homotetramer.

It catalyses the reaction UTP + L-glutamine + ATP + H2O = CTP + L-glutamate + ADP + phosphate + 2 H(+). It carries out the reaction L-glutamine + H2O = L-glutamate + NH4(+). The catalysed reaction is UTP + NH4(+) + ATP = CTP + ADP + phosphate + 2 H(+). It functions in the pathway pyrimidine metabolism; CTP biosynthesis via de novo pathway; CTP from UDP: step 2/2. With respect to regulation, allosterically activated by GTP, when glutamine is the substrate; GTP has no effect on the reaction when ammonia is the substrate. The allosteric effector GTP functions by stabilizing the protein conformation that binds the tetrahedral intermediate(s) formed during glutamine hydrolysis. Inhibited by the product CTP, via allosteric rather than competitive inhibition. In terms of biological role, catalyzes the ATP-dependent amination of UTP to CTP with either L-glutamine or ammonia as the source of nitrogen. Regulates intracellular CTP levels through interactions with the four ribonucleotide triphosphates. In Gluconacetobacter diazotrophicus (strain ATCC 49037 / DSM 5601 / CCUG 37298 / CIP 103539 / LMG 7603 / PAl5), this protein is CTP synthase.